The primary structure comprises 368 residues: tRNA-specific 2-thiouridylase MnmA (368 aa).

Residues 11 to 18 (GMSGGVDS) and Met37 each bind ATP. The interval 97–99 (NPD) is interaction with target base in tRNA. Cys102 serves as the catalytic Nucleophile. Cys102 and Cys199 form a disulfide bridge. Residue Gly127 coordinates ATP. Residues 149 to 151 (KDQ) are interaction with tRNA. Cys199 functions as the Cysteine persulfide intermediate in the catalytic mechanism. An interaction with tRNA region spans residues 311 to 312 (RY).

This sequence belongs to the MnmA/TRMU family. In terms of assembly, interacts with TusE.

Its subcellular location is the cytoplasm. It carries out the reaction S-sulfanyl-L-cysteinyl-[protein] + uridine(34) in tRNA + AH2 + ATP = 2-thiouridine(34) in tRNA + L-cysteinyl-[protein] + A + AMP + diphosphate + H(+). In terms of biological role, catalyzes the 2-thiolation of uridine at the wobble position (U34) of tRNA(Lys), tRNA(Glu) and tRNA(Gln), leading to the formation of s(2)U34, the first step of tRNA-mnm(5)s(2)U34 synthesis. Sulfur is provided by IscS, via a sulfur-relay system. Binds ATP and its substrate tRNAs. This is tRNA-specific 2-thiouridylase MnmA from Salmonella paratyphi B (strain ATCC BAA-1250 / SPB7).